The chain runs to 119 residues: Ribonuclease P protein component (119 aa).

The protein belongs to the RnpA family. In terms of assembly, consists of a catalytic RNA component (M1 or rnpB) and a protein subunit.

The catalysed reaction is Endonucleolytic cleavage of RNA, removing 5'-extranucleotides from tRNA precursor.. Functionally, RNaseP catalyzes the removal of the 5'-leader sequence from pre-tRNA to produce the mature 5'-terminus. It can also cleave other RNA substrates such as 4.5S RNA. The protein component plays an auxiliary but essential role in vivo by binding to the 5'-leader sequence and broadening the substrate specificity of the ribozyme. The protein is Ribonuclease P protein component of Mycobacterium avium (strain 104).